Reading from the N-terminus, the 304-residue chain is Dihydroorotate dehydrogenase B (NAD(+)), catalytic subunit (304 aa).

FMN-binding positions include Ser-22 and 46–47 (KA). Substrate is bound by residues Lys-46 and 70–74 (NAIGL). Residues Asn-100 and Asn-128 each contribute to the FMN site. Asn-128 provides a ligand contact to substrate. The active-site Nucleophile is the Cys-131. 2 residues coordinate FMN: Lys-166 and Ile-192. 193 to 194 (NT) serves as a coordination point for substrate. FMN is bound by residues Gly-218, 244-245 (GG), and 266-267 (GT).

The protein belongs to the dihydroorotate dehydrogenase family. Type 1 subfamily. In terms of assembly, heterotetramer of 2 PyrK and 2 PyrD type B subunits. It depends on FMN as a cofactor.

It is found in the cytoplasm. The catalysed reaction is (S)-dihydroorotate + NAD(+) = orotate + NADH + H(+). It functions in the pathway pyrimidine metabolism; UMP biosynthesis via de novo pathway; orotate from (S)-dihydroorotate (NAD(+) route): step 1/1. In terms of biological role, catalyzes the conversion of dihydroorotate to orotate with NAD(+) as electron acceptor. In Fusobacterium nucleatum subsp. nucleatum (strain ATCC 25586 / DSM 15643 / BCRC 10681 / CIP 101130 / JCM 8532 / KCTC 2640 / LMG 13131 / VPI 4355), this protein is Dihydroorotate dehydrogenase B (NAD(+)), catalytic subunit (pyrD).